We begin with the raw amino-acid sequence, 349 residues long: KH domain-containing, RNA-binding, signal transduction-associated protein 2 (349 aa).

The KH domain maps to leucine 65–isoleucine 135. Disordered stretches follow at residues serine 181–alanine 263 and glutamate 320–tyrosine 349. Residues arginine 218–glycine 231 are compositionally biased toward low complexity. Omega-N-methylarginine occurs at positions 230 and 240. Over residues glycine 340–tyrosine 349 the composition is skewed to basic and acidic residues.

This sequence belongs to the KHDRBS family. In terms of assembly, self-associates to form homooligomers. Interacts with SAFB, SFRS9 and YTHDC1. Found in a complex with KHDRBS1, KHDRBS2 and KHDRBS3. Interacts with RBMX. Interacts with the SH3 domains of FYN and PLCG1. Interacts with the SH2 domains of FYN, GRAP2, PLCG1 and RASA1. Interacts with RBMX. Post-translationally, methylated. In terms of processing, phosphorylated on tyrosine residues by FYN. Tyrosine phosphorylated by PTK6 and SRC. Tyrosine phosphorylated by SRC during mitosis. Expressed in the cortex, cerebellum, striatum, midbrain, brainstem and thalamus of the brain (at protein level). Expressed in neurons (at protein level). Expressed in brain and testis. Expressed in the dentate gyrus of the hippocampus.

It localises to the nucleus. Functionally, RNA-binding protein that plays a role in the regulation of alternative splicing and influences mRNA splice site selection and exon inclusion. Its phosphorylation by FYN inhibits its ability to regulate splice site selection. Induces an increased concentration-dependent incorporation of exon in CD44 pre-mRNA by direct binding to purine-rich exonic enhancer. May function as an adapter protein for Src kinases during mitosis. Binds both poly(A) and poly(U) homopolymers. Phosphorylation by PTK6 inhibits its RNA-binding ability. The protein is KH domain-containing, RNA-binding, signal transduction-associated protein 2 (Khdrbs2) of Rattus norvegicus (Rat).